A 209-amino-acid polypeptide reads, in one-letter code: Uracil phosphoribosyltransferase (209 aa).

Residues R79, R104, and D131–S139 each bind 5-phospho-alpha-D-ribose 1-diphosphate. Uracil-binding positions include I194 and G199 to A201. A 5-phospho-alpha-D-ribose 1-diphosphate-binding site is contributed by D200.

It belongs to the UPRTase family. Requires Mg(2+) as cofactor.

The catalysed reaction is UMP + diphosphate = 5-phospho-alpha-D-ribose 1-diphosphate + uracil. It functions in the pathway pyrimidine metabolism; UMP biosynthesis via salvage pathway; UMP from uracil: step 1/1. Allosterically activated by GTP. In terms of biological role, catalyzes the conversion of uracil and 5-phospho-alpha-D-ribose 1-diphosphate (PRPP) to UMP and diphosphate. In Clostridioides difficile (strain 630) (Peptoclostridium difficile), this protein is Uracil phosphoribosyltransferase.